Here is a 297-residue protein sequence, read N- to C-terminus: Cell division protein FtsX (297 aa).

Over 1–21 (MRFGFLLNEVLTGFRRNVTMT) the chain is Cytoplasmic. Residues 22–42 (IAMILTTAISVGLFGGGMLVV) form a helical membrane-spanning segment. Residues 43–171 (RLADSSRAIY…LFAVLDGLSN (129 aa)) lie on the Extracellular side of the membrane. A helical transmembrane segment spans residues 172–192 (AAFAVALVQAIGAILLIANMV). Residues 193–219 (QVAAYTRRTEIGIMRLVGASRWYTQLP) lie on the Cytoplasmic side of the membrane. Residues 220-240 (FLVEAMLAATMGVGIAVAGLM) traverse the membrane as a helical segment. The Extracellular segment spans residues 241–267 (VVRALFLENALNQFYQANLIAKVDYAD). The helical transmembrane segment at 268–288 (ILFITPWLLLLGVAMSGLTAY) threads the bilayer. The Cytoplasmic portion of the chain corresponds to 289–297 (LTLRLYVRR).

It belongs to the ABC-4 integral membrane protein family. FtsX subfamily. As to quaternary structure, forms a membrane-associated complex with FtsE.

The protein localises to the cell membrane. Functionally, part of the ABC transporter FtsEX involved in cellular division. In Mycobacterium tuberculosis (strain ATCC 25177 / H37Ra), this protein is Cell division protein FtsX.